The following is a 330-amino-acid chain: Phenylalanine--tRNA ligase alpha subunit (330 aa).

Mg(2+) is bound at residue Glu246.

Belongs to the class-II aminoacyl-tRNA synthetase family. Phe-tRNA synthetase alpha subunit type 1 subfamily. In terms of assembly, tetramer of two alpha and two beta subunits. Mg(2+) serves as cofactor.

It is found in the cytoplasm. It catalyses the reaction tRNA(Phe) + L-phenylalanine + ATP = L-phenylalanyl-tRNA(Phe) + AMP + diphosphate + H(+). This is Phenylalanine--tRNA ligase alpha subunit from Sulfurimonas denitrificans (strain ATCC 33889 / DSM 1251) (Thiomicrospira denitrificans (strain ATCC 33889 / DSM 1251)).